A 552-amino-acid polypeptide reads, in one-letter code: Cochlin (552 aa).

Residues 1–26 (MPSSRIPALCLGAWLLLLLLPRFARA) form the signal peptide. Residues 30–123 (VPIPVTCFTR…QMLSRWSASF (94 aa)) form the LCCL domain. Intrachain disulfides connect Cys-36/Cys-52 and Cys-56/Cys-76. N-linked (GlcNAc...) asparagine glycosylation is present at Asn-102. A disordered region spans residues 129 to 161 (KSSTQEATGRAVSTAHPPSGKRLKKTPEKKTGN). VWFA domains follow at residues 167 to 352 (DIAF…VQKL) and 369 to 539 (NIAF…VSDV). A glycan (N-linked (GlcNAc...) asparagine) is linked at Asn-223.

As to quaternary structure, monomer. May form homodimer. Interacts with type II collagen. Interacts with SLC44A2. Interacts with ANXA2. In terms of processing, N-glycosylated. As to expression, expressed in inner ear structures.

It is found in the secreted. The protein resides in the extracellular space. Plays a role in the control of cell shape and motility in the trabecular meshwork. This is Cochlin (Coch) from Mus musculus (Mouse).